Consider the following 463-residue polypeptide: Cysteine--tRNA ligase (463 aa).

Cys-33 lines the Zn(2+) pocket. The 'HIGH' region motif lies at 35 to 45 (PTVYDFAHIGN). Residues Cys-221, His-246, and Glu-250 each coordinate Zn(2+). The 'KMSKS' region signature appears at 279-283 (KMSKS). Residue Lys-282 coordinates ATP.

This sequence belongs to the class-I aminoacyl-tRNA synthetase family. In terms of assembly, monomer. Requires Zn(2+) as cofactor.

It is found in the cytoplasm. It catalyses the reaction tRNA(Cys) + L-cysteine + ATP = L-cysteinyl-tRNA(Cys) + AMP + diphosphate. The protein is Cysteine--tRNA ligase of Rhizobium johnstonii (strain DSM 114642 / LMG 32736 / 3841) (Rhizobium leguminosarum bv. viciae).